The primary structure comprises 316 residues: METWQELKVTVKREGEELVSNLLIELGAQGVAIEDSMDYMGNVDRFGEIFPEVEQQEEIVVTAYYPDTVDVTVVEADLQARLAELTDFMDLGEVKMGTTALAEEDWADNWKKYYEPARITHDLTIVPSWTDYEATAGEKIIKLDPGMAFGTGTHPTTKMSLFALEQVLRGGETVLDVGTGSGVLSIASSLLGAKEIFAYDLDDVAVRVAQENIELNPGMENIHVAAGDLLKGVEIEADVIVANILADILIHLTDDAYRLVKDEGYLIMSGIIKDKWDMVRESAESAGFFLETHMVQGEWNACVFKKTKDISGVIGG.

Residues threonine 157, glycine 178, aspartate 200, and asparagine 243 each coordinate S-adenosyl-L-methionine.

It belongs to the methyltransferase superfamily. PrmA family.

Its subcellular location is the cytoplasm. The catalysed reaction is L-lysyl-[protein] + 3 S-adenosyl-L-methionine = N(6),N(6),N(6)-trimethyl-L-lysyl-[protein] + 3 S-adenosyl-L-homocysteine + 3 H(+). Methylates ribosomal protein L11. The protein is Ribosomal protein L11 methyltransferase of Streptococcus pneumoniae serotype 2 (strain D39 / NCTC 7466).